The chain runs to 254 residues: Phosphoribosylaminoimidazole-succinocarboxamide synthase (254 aa).

It belongs to the SAICAR synthetase family.

It catalyses the reaction 5-amino-1-(5-phospho-D-ribosyl)imidazole-4-carboxylate + L-aspartate + ATP = (2S)-2-[5-amino-1-(5-phospho-beta-D-ribosyl)imidazole-4-carboxamido]succinate + ADP + phosphate + 2 H(+). It functions in the pathway purine metabolism; IMP biosynthesis via de novo pathway; 5-amino-1-(5-phospho-D-ribosyl)imidazole-4-carboxamide from 5-amino-1-(5-phospho-D-ribosyl)imidazole-4-carboxylate: step 1/2. This chain is Phosphoribosylaminoimidazole-succinocarboxamide synthase, found in Bartonella quintana (strain Toulouse) (Rochalimaea quintana).